A 240-amino-acid chain; its full sequence is Epoxyqueuosine reductase QueH (240 aa).

Positions 43, 44, 129, and 132 each coordinate [4Fe-4S] cluster. The cysteines at positions 211 and 213 are disulfide-linked.

The protein belongs to the QueH family.

It catalyses the reaction epoxyqueuosine(34) in tRNA + AH2 = queuosine(34) in tRNA + A + H2O. The protein operates within tRNA modification; tRNA-queuosine biosynthesis. Functionally, catalyzes the conversion of epoxyqueuosine (oQ) to queuosine (Q), which is a hypermodified base found in the wobble positions of tRNA(Asp), tRNA(Asn), tRNA(His) and tRNA(Tyr). In Staphylococcus aureus (strain Mu50 / ATCC 700699), this protein is Epoxyqueuosine reductase QueH.